Here is a 979-residue protein sequence, read N- to C-terminus: Mast/stem cell growth factor receptor Kit (979 aa).

A signal peptide spans 1–27; it reads MRGARGAWDFLCVLLLLLLLGVQTGSS. The Extracellular portion of the chain corresponds to 28-527; it reads QPSVSPGEPS…QIHPHTLFTP (500 aa). Ig-like C2-type domains follow at residues 29-114, 123-207, 214-311, 320-413, and 416-510; these read PSVS…VFVR, DLPL…LKVR, PVVS…LEVV, PMMS…VYVN, and PEIL…FNFA. Cys60 and Cys99 are joined by a disulfide. N-linked (GlcNAc...) asparagine glycans are attached at residues Asn96, Asn132, and Asn147. 3 disulfide bridges follow: Cys138–Cys188, Cys153–Cys185, and Cys235–Cys293. Residues Asn286, Asn296, Asn303, Asn355, Asn370, Asn403, Asn466, and Asn489 are each glycosylated (N-linked (GlcNAc...) asparagine). A disulfide bond links Cys431 and Cys494. The chain crosses the membrane as a helical span at residues 528–548; sequence LLIGFVIAAGMMCIIVMILTY. Topologically, residues 549–979 are cytoplasmic; that stretch reads KYLQKPMYEV…TQPLLVHEDV (431 aa). Phosphotyrosine; by autocatalysis is present on residues Tyr550, Tyr556, Tyr571, and Tyr573. Tyr571 serves as a coordination point for Mg(2+). Positions 571–573 are important for interaction with phosphotyrosine-binding proteins; sequence YVY. A Protein kinase domain is found at 592–940; it reads LSFGKTLGAG…ISDSTNHIYS (349 aa). ATP is bound by residues 599–606, Lys626, and 674–680; these read GAGAFGKV and EYCCYGD. Tyr706, Tyr724, and Tyr733 each carry phosphotyrosine; by autocatalysis. A phosphoserine; by PKC/PRKCA mark is found at Ser744 and Ser749. The Proton acceptor role is filled by Asp795. Arg799 provides a ligand contact to ATP. Residues Asn800 and Asp813 each coordinate Mg(2+). At Ser824 the chain carries Phosphoserine. Tyr826 carries the post-translational modification Phosphotyrosine; by autocatalysis. Phosphoserine is present on Ser894. Phosphotyrosine; by autocatalysis occurs at positions 903 and 939. Position 962 is a phosphoserine (Ser962).

The protein belongs to the protein kinase superfamily. Tyr protein kinase family. CSF-1/PDGF receptor subfamily. In terms of assembly, monomer in the absence of bound KITLG/SCF. Homodimer in the presence of bound KITLG/SCF, forming a heterotetramer with two KITLG/SCF molecules. Interacts (via phosphorylated tyrosine residues) with the adapter proteins GRB2 and GRB7 (via SH2 domain), and SH2B2/APS. Interacts (via C-terminus) with MPDZ (via the tenth PDZ domain). Interacts (via phosphorylated tyrosine residues) with PIK3R1 and PIK3 catalytic subunit. Interacts (via phosphorylated tyrosine) with CRK (isoform Crk-II), FYN, SHC1 and MATK/CHK (via SH2 domain). Interacts with LYN and FES/FPS. Interacts (via phosphorylated tyrosine residues) with the protein phosphatases PTPN6/SHP-1 (via SH2 domain), PTPN11/SHP-2 (via SH2 domain) and PTPRU. Interacts with PLCG1. Interacts with DOK1 and TEC. Interacts with IL1RAP (independent of stimulation with KITLG/SCF). A mast cell-specific KITLG/SCF-induced interleukin-33 signaling complex contains IL1RL1, IL1RAP, KIT and MYD88. Post-translationally, ubiquitinated by SOCS6. KIT is rapidly ubiquitinated after autophosphorylation induced by KITLG/SCF binding, leading to internalization and degradation. Autophosphorylated on tyrosine residues. KITLG/SCF binding promotes autophosphorylation. Phosphorylated tyrosine residues are important for interaction with specific binding partners.

The protein localises to the cell membrane. The catalysed reaction is L-tyrosyl-[protein] + ATP = O-phospho-L-tyrosyl-[protein] + ADP + H(+). Its activity is regulated as follows. Present in an inactive conformation in the absence of bound ligand. KITLG/SCF binding leads to dimerization and activation by autophosphorylation on tyrosine residues. Activity is down-regulated by PRKCA-mediated phosphorylation on serine residues. Tyrosine-protein kinase that acts as a cell-surface receptor for the cytokine KITLG/SCF and plays an essential role in the regulation of cell survival and proliferation, hematopoiesis, stem cell maintenance, gametogenesis, mast cell development, migration and function, and in melanogenesis. In response to KITLG/SCF binding, KIT can activate several signaling pathways. Phosphorylates PIK3R1, PLCG1, SH2B2/APS and CBL. Activates the AKT1 signaling pathway by phosphorylation of PIK3R1, the regulatory subunit of phosphatidylinositol 3-kinase. Activated KIT also transmits signals via GRB2 and activation of RAS, RAF1 and the MAP kinases MAPK1/ERK2 and/or MAPK3/ERK1. Promotes activation of STAT family members STAT1, STAT3, STAT5A and STAT5B. Activation of PLCG1 leads to the production of the cellular signaling molecules diacylglycerol and inositol 1,4,5-trisphosphate. KIT signaling is modulated by protein phosphatases, and by rapid internalization and degradation of the receptor. Activated KIT promotes phosphorylation of the protein phosphatases PTPN6/SHP-1 and PTPRU, and of the transcription factors STAT1, STAT3, STAT5A and STAT5B. Promotes phosphorylation of PIK3R1, CBL, CRK (isoform Crk-II), LYN, MAPK1/ERK2 and/or MAPK3/ERK1, PLCG1, SRC and SHC1. In Canis lupus familiaris (Dog), this protein is Mast/stem cell growth factor receptor Kit (KIT).